We begin with the raw amino-acid sequence, 352 residues long: Glycogen synthase kinase 3 (352 aa).

The 291-residue stretch at 20–310 (YTVERVAGQG…PLDALCHPFF (291 aa)) folds into the Protein kinase domain. ATP is bound by residues 26 to 34 (AGQGTFGTV) and lysine 49. Aspartate 152 (proton acceptor) is an active-site residue.

The protein belongs to the protein kinase superfamily. CMGC Ser/Thr protein kinase family. GSK-3 subfamily. In terms of assembly, inhibited by cyclin kinase 2 (CDK2) inhibitors, including GW8510.

It catalyses the reaction L-seryl-[tau protein] + ATP = O-phospho-L-seryl-[tau protein] + ADP + H(+). It carries out the reaction L-threonyl-[tau protein] + ATP = O-phospho-L-threonyl-[tau protein] + ADP + H(+). This Trypanosoma brucei brucei (strain 927/4 GUTat10.1) protein is Glycogen synthase kinase 3.